Consider the following 169-residue polypeptide: Small ribosomal subunit protein uS13c (169 aa).

The transit peptide at 1–47 (MAQMVAMPVAHSLSLICNWAKSNPLSRNTLALPASNTPNKQSLSIRC) directs the protein to the chloroplast.

This sequence belongs to the universal ribosomal protein uS13 family. In terms of assembly, part of the 30S ribosomal subunit.

It localises to the plastid. It is found in the chloroplast. Located at the top of the head of the 30S subunit, it contacts several helices of the 16S rRNA. The polypeptide is Small ribosomal subunit protein uS13c (RPS13) (Arabidopsis thaliana (Mouse-ear cress)).